Reading from the N-terminus, the 187-residue chain is Elongation factor P (187 aa).

This sequence belongs to the elongation factor P family.

The protein resides in the cytoplasm. It functions in the pathway protein biosynthesis; polypeptide chain elongation. Involved in peptide bond synthesis. Stimulates efficient translation and peptide-bond synthesis on native or reconstituted 70S ribosomes in vitro. Probably functions indirectly by altering the affinity of the ribosome for aminoacyl-tRNA, thus increasing their reactivity as acceptors for peptidyl transferase. The chain is Elongation factor P from Pseudarthrobacter chlorophenolicus (strain ATCC 700700 / DSM 12829 / CIP 107037 / JCM 12360 / KCTC 9906 / NCIMB 13794 / A6) (Arthrobacter chlorophenolicus).